The sequence spans 466 residues: Cytochrome P450 85A1 (466 aa).

A helical transmembrane segment spans residues 1–21 (MVLAVLIGVLVGIVLVSSLLL). Position 416 (Cys416) interacts with heme.

It belongs to the cytochrome P450 family. Requires heme as cofactor.

It localises to the membrane. It carries out the reaction 6-deoxoteasterone + reduced [NADPH--hemoprotein reductase] + O2 = 6alpha-hydroxyteasterone + oxidized [NADPH--hemoprotein reductase] + H2O + H(+). It catalyses the reaction 6alpha-hydroxytyphasterol + reduced [NADPH--hemoprotein reductase] + O2 = teasterone + oxidized [NADPH--hemoprotein reductase] + 2 H2O + H(+). The catalysed reaction is 3-dehydro-6-deoxoteasterone + reduced [NADPH--hemoprotein reductase] + O2 = 3-dehydro-6alpha-hydroxyteasterone + oxidized [NADPH--hemoprotein reductase] + H2O + H(+). The enzyme catalyses 3-dehydro-6alpha-hydroxyteasterone + reduced [NADPH--hemoprotein reductase] + O2 = 3-dehydroteasterone + oxidized [NADPH--hemoprotein reductase] + 2 H2O + H(+). It carries out the reaction 6-deoxotyphasterol + reduced [NADPH--hemoprotein reductase] + O2 = 6alpha-hydroxytyphasterol + oxidized [NADPH--hemoprotein reductase] + H2O + H(+). It catalyses the reaction 6alpha-hydroxytyphasterol + reduced [NADPH--hemoprotein reductase] + O2 = typhasterol + oxidized [NADPH--hemoprotein reductase] + 2 H2O + H(+). The catalysed reaction is 6-deoxocastasterone + reduced [NADPH--hemoprotein reductase] + O2 = 6alpha-hydroxycastasterone + oxidized [NADPH--hemoprotein reductase] + H2O + H(+). The enzyme catalyses 6alpha-hydroxycastasterone + reduced [NADPH--hemoprotein reductase] + O2 = castasterone + oxidized [NADPH--hemoprotein reductase] + 2 H2O + H(+). It carries out the reaction 3-dehydro-6-deoxoteasterone + 2 reduced [NADPH--hemoprotein reductase] + 2 O2 = 3-dehydroteasterone + 2 oxidized [NADPH--hemoprotein reductase] + 3 H2O + 2 H(+). It catalyses the reaction 6-deoxocastasterone + 2 reduced [NADPH--hemoprotein reductase] + 2 O2 = castasterone + 2 oxidized [NADPH--hemoprotein reductase] + 3 H2O + 2 H(+). The catalysed reaction is 6-deoxoteasterone + 2 reduced [NADPH--hemoprotein reductase] + 2 O2 = teasterone + 2 oxidized [NADPH--hemoprotein reductase] + 3 H2O + 2 H(+). The enzyme catalyses 6-deoxotyphasterol + 2 reduced [NADPH--hemoprotein reductase] + 2 O2 = typhasterol + 2 oxidized [NADPH--hemoprotein reductase] + 3 H2O + 2 H(+). It functions in the pathway plant hormone biosynthesis; brassinosteroid biosynthesis. In terms of biological role, involved in reduction steps of the biosynthesis of plant campesterol-derivative steroids, ending to castasterone (CS) but missing brassinolide (BL). Catalyzes the C6-oxidation step in brassinosteroids biosynthesis; the conversion of 6-deoxoteasterone (6-deoxoTE) to teasterone (TE), 3-dehydro-6-deoxoteasterone (6-deoxo3DT, 6-deoxo-3-DHT) to 3-dehydroteasterone (3DT, 3-DHT), 6-deoxotyphasterol (6-deoxoTY) to typhasterol (TY) and of 6-deoxocastasterone (6-deoxoCS) to castasterone (CS). The sequence is that of Cytochrome P450 85A1 from Brachypodium distachyon (Purple false brome).